Reading from the N-terminus, the 321-residue chain is Olfactory receptor 52N4 (321 aa).

Residues 1 to 27 (MLTLNKTDLIPASFILNGVPGLEDTQL) lie on the Extracellular side of the membrane. Asn5 carries an N-linked (GlcNAc...) asparagine glycan. The helical transmembrane segment at 28–48 (WISFPFCSMYVVAMVGNCGLL) threads the bilayer. The Cytoplasmic segment spans residues 49–56 (YLIHYEDA). The helical transmembrane segment at 57–77 (LHKPMYYFLAMLSFTDLVMCS) threads the bilayer. The Extracellular portion of the chain corresponds to 78–101 (STIPKALCIFWFHLKDIGFDECLV). An intrachain disulfide couples Cys99 to Cys191. Residues 102-122 (QMFFTHTFTGMESGVLMLMAL) traverse the membrane as a helical segment. Residues 123–141 (DRYVAICYPLRYSTILTNP) are Cytoplasmic-facing. Residues 142–162 (VIAKVGTATFLRGVLLIIPFT) form a helical membrane-spanning segment. The Extracellular segment spans residues 163–198 (FLTKLLPYCRGNILPHTYCDHMSVAKLSCGNVKVNA). A helical transmembrane segment spans residues 199–219 (IYGLMVALLIWGFDILCITNS). The Cytoplasmic segment spans residues 220-239 (YTMILRAVVSLSSADARQKA). The helical transmembrane segment at 240 to 260 (FNTCTAHICAIVFSYTPAFFS) threads the bilayer. Over 261-276 (FFSHRFGEHIIPPSCH) the chain is Extracellular. The helical transmembrane segment at 277–297 (IIVANIYLLLPPTMNPIVYGV) threads the bilayer. At 298–321 (KTKQIRDCVIRILSGSKDTKSYSM) the chain is on the cytoplasmic side.

The protein belongs to the G-protein coupled receptor 1 family.

The protein resides in the cell membrane. Functionally, odorant receptor. This is Olfactory receptor 52N4 (OR52N4) from Homo sapiens (Human).